Reading from the N-terminus, the 304-residue chain is D-alanine--D-alanine ligase (304 aa).

The 195-residue stretch at 99 to 293 (KKILRYEGIE…YSKLLDMIIE (195 aa)) folds into the ATP-grasp domain. 126–181 (LDKLGFPLVVKPNSGGSSVGVKIVYDKDELISMLETVFEWDSEVVIEKYIKGEEIT) provides a ligand contact to ATP. Residues Asp248, Glu260, and Asn262 each contribute to the Mg(2+) site.

This sequence belongs to the D-alanine--D-alanine ligase family. Mg(2+) serves as cofactor. The cofactor is Mn(2+).

It localises to the cytoplasm. The enzyme catalyses 2 D-alanine + ATP = D-alanyl-D-alanine + ADP + phosphate + H(+). It functions in the pathway cell wall biogenesis; peptidoglycan biosynthesis. In terms of biological role, cell wall formation. The polypeptide is D-alanine--D-alanine ligase (Bacillus anthracis (strain A0248)).